The primary structure comprises 337 residues: Ketol-acid reductoisomerase (NADP(+)) (337 aa).

The 181-residue stretch at 3 to 183 (VEVFYDDDAD…GGTRAGVIKT (181 aa)) folds into the KARI N-terminal Rossmann domain. Residues 26 to 29 (YGSQ), S52, S54, and 84 to 87 (DTAQ) contribute to the NADP(+) site. The active site involves H109. G135 contacts NADP(+). Residues 184–329 (TFTEETETDL…GRLRAMMSWV (146 aa)) enclose the KARI C-terminal knotted domain. Residues D192, E196, E228, and E232 each contribute to the Mg(2+) site. Substrate is bound at residue S253.

It belongs to the ketol-acid reductoisomerase family. Requires Mg(2+) as cofactor.

It carries out the reaction (2R)-2,3-dihydroxy-3-methylbutanoate + NADP(+) = (2S)-2-acetolactate + NADPH + H(+). The enzyme catalyses (2R,3R)-2,3-dihydroxy-3-methylpentanoate + NADP(+) = (S)-2-ethyl-2-hydroxy-3-oxobutanoate + NADPH + H(+). The protein operates within amino-acid biosynthesis; L-isoleucine biosynthesis; L-isoleucine from 2-oxobutanoate: step 2/4. It participates in amino-acid biosynthesis; L-valine biosynthesis; L-valine from pyruvate: step 2/4. Its function is as follows. Involved in the biosynthesis of branched-chain amino acids (BCAA). Catalyzes an alkyl-migration followed by a ketol-acid reduction of (S)-2-acetolactate (S2AL) to yield (R)-2,3-dihydroxy-isovalerate. In the isomerase reaction, S2AL is rearranged via a Mg-dependent methyl migration to produce 3-hydroxy-3-methyl-2-ketobutyrate (HMKB). In the reductase reaction, this 2-ketoacid undergoes a metal-dependent reduction by NADPH to yield (R)-2,3-dihydroxy-isovalerate. The chain is Ketol-acid reductoisomerase (NADP(+)) from Salinispora tropica (strain ATCC BAA-916 / DSM 44818 / JCM 13857 / NBRC 105044 / CNB-440).